Consider the following 358-residue polypeptide: Peptide chain release factor 1 (358 aa).

Gln233 bears the N5-methylglutamine mark.

Belongs to the prokaryotic/mitochondrial release factor family. Methylated by PrmC. Methylation increases the termination efficiency of RF1.

It is found in the cytoplasm. In terms of biological role, peptide chain release factor 1 directs the termination of translation in response to the peptide chain termination codons UAG and UAA. The chain is Peptide chain release factor 1 from Staphylococcus epidermidis (strain ATCC 35984 / DSM 28319 / BCRC 17069 / CCUG 31568 / BM 3577 / RP62A).